The sequence spans 267 residues: MPRSCCSRSGALLLALLLQASMEVRGWCLESSQCQDLTTESNLLECIRACKPDLSAETPMFPGNGDEQPLTENPRKYVMGHFRWDRFGRRNSSSSGSSGAGQKREDVSAGEDCGPLPEGGPEPRSDGAKPGPREGKRSYSMEHFRWGKPVGKKRRPVKVYPNGAEDESAEAFPLEFKRELTGQRLREGDGPDGPADDGAGAQADLEHSLLVAAEKKDEGPYRMEHFRWGSPPKDKRYGGFMTSEKSQTPLVTLFKNAIIKNAYKKGE.

The N-terminal stretch at 1–26 (MPRSCCSRSGALLLALLLQASMEVRG) is a signal peptide. A disulfide bridge links Cys-28 with Cys-50. O-linked (HexNAc...) threonine glycosylation is present at Thr-71. Phe-87 carries the post-translational modification Phenylalanine amide. 3 disordered regions span residues 88–175 (GRRN…FPLE), 181–200 (TGQR…DGAG), and 222–241 (RMEH…GGFM). An N-linked (GlcNAc...) asparagine glycan is attached at Asn-91. Residues 121 to 145 (PEPRSDGAKPGPREGKRSYSMEHFR) show a composition bias toward basic and acidic residues. The residue at position 134 (Glu-134) is a Glutamic acid 1-amide. The residue at position 138 (Ser-138) is an N-acetylserine; in Corticotropin. The residue at position 150 (Val-150) is a Valine amide. Phosphoserine is present on Ser-168. Residues 222–237 (RMEHFRWGSPPKDKRY) are compositionally biased toward basic and acidic residues.

It belongs to the POMC family. In terms of processing, specific enzymatic cleavages at paired basic residues yield the different active peptides. Post-translationally, O-glycosylated; reducing sugar is probably N-acetylgalactosamine. In terms of tissue distribution, ACTH and MSH are produced by the pituitary gland.

It localises to the secreted. Its function is as follows. Stimulates the adrenal glands to release cortisol. Functionally, anorexigenic peptide. Increases the pigmentation of skin by increasing melanin production in melanocytes. In terms of biological role, increases the pigmentation of skin by increasing melanin production in melanocytes. Endogenous orexigenic opiate. Its function is as follows. Endogenous opiate. The sequence is that of Pro-opiomelanocortin (POMC) from Homo sapiens (Human).